Here is a 334-residue protein sequence, read N- to C-terminus: Aspartate carbamoyltransferase catalytic subunit (334 aa).

Positions 71 and 72 each coordinate carbamoyl phosphate. Lysine 99 lines the L-aspartate pocket. Arginine 121, histidine 151, and glutamine 154 together coordinate carbamoyl phosphate. 2 residues coordinate L-aspartate: arginine 184 and arginine 239. Residues glycine 280 and proline 281 each coordinate carbamoyl phosphate.

Belongs to the aspartate/ornithine carbamoyltransferase superfamily. ATCase family. In terms of assembly, heterododecamer (2C3:3R2) of six catalytic PyrB chains organized as two trimers (C3), and six regulatory PyrI chains organized as three dimers (R2).

It catalyses the reaction carbamoyl phosphate + L-aspartate = N-carbamoyl-L-aspartate + phosphate + H(+). It functions in the pathway pyrimidine metabolism; UMP biosynthesis via de novo pathway; (S)-dihydroorotate from bicarbonate: step 2/3. In terms of biological role, catalyzes the condensation of carbamoyl phosphate and aspartate to form carbamoyl aspartate and inorganic phosphate, the committed step in the de novo pyrimidine nucleotide biosynthesis pathway. This is Aspartate carbamoyltransferase catalytic subunit from Pseudomonas putida (strain ATCC 47054 / DSM 6125 / CFBP 8728 / NCIMB 11950 / KT2440).